Here is a 181-residue protein sequence, read N- to C-terminus: Translation initiation factor IF-3 (181 aa).

It belongs to the IF-3 family. Monomer.

The protein localises to the cytoplasm. Its function is as follows. IF-3 binds to the 30S ribosomal subunit and shifts the equilibrium between 70S ribosomes and their 50S and 30S subunits in favor of the free subunits, thus enhancing the availability of 30S subunits on which protein synthesis initiation begins. This chain is Translation initiation factor IF-3, found in Cereibacter sphaeroides (strain ATCC 17023 / DSM 158 / JCM 6121 / CCUG 31486 / LMG 2827 / NBRC 12203 / NCIMB 8253 / ATH 2.4.1.) (Rhodobacter sphaeroides).